Reading from the N-terminus, the 702-residue chain is MAQKHPGERGLYGAHHSGGASLRTLGPSVDPEIPSFSGLRDSAGTAPNGTRCLTEHSGPKHTQHPNPAHWLDPSHGPPGGPGPPRDAEDPDQSETSSEEESGVDQELSKENETGNQKDGNSFLSIPSACNCQGTPGIPEGPYSEGGNGSSSNFCHHCTSPALGEDELEEEYDDEESLKFPSDFSRVSSGKKPPSRRQRHRFPTKEDTREGGRRDPRSPGRHRLGRKRSQADKRKGLGLWGAEELCQLGQAGFWWLIELLVLVGEYVETCGHLIYACRQLKSSDLDLFRVWMGVWTGRLGGWAQVMFQFLSQGFYCGVGLFTRFLKLLGALLLLALALFLGFLQLGWRFLVGLGDRLGWRDKATWLFSWLDSPALQRCLTLLRDSRPWQRLVRIVQWGWLELPWVKQNINRQGNAPVASGRYCQPEEEVARLLTMAGVPEDELNPFHVLGVEATASDVELKKAYRQLAVMVHPDKNHHPRAEEAFKVLRAAWDIVSNAEKRKEYEMKRMAENELSRSVNEFLSKLQDDLKEAMNTMMCSRCQGKHRRFEMDREPKSARYCAECNRLHPAEEGDFWAESSMLGLKITYFALMDGKVYDITEWAGCQRVGISPDTHRVPYHISFGSRIPGTRGRQRATPDAPPADLQDFLSRIFQVPPGQMPNGNFFAAPQPAPGAAAASKPNSTVPKGEAKPKRRKKVRRPFQR.

2 disordered regions span residues 1 to 148 (MAQK…GGNG) and 165 to 229 (DELE…KRSQ). The span at 75–84 (HGPPGGPGPP) shows a compositional bias: pro residues. Residues 88–103 (EDPDQSETSSEEESGV) are compositionally biased toward acidic residues. Residues 113–133 (TGNQKDGNSFLSIPSACNCQG) are compositionally biased toward polar residues. Acidic residues predominate over residues 165–175 (DELEEEYDDEE). Over residues 192 to 201 (PPSRRQRHRF) the composition is skewed to basic residues. Over residues 202–217 (PTKEDTREGGRRDPRS) the composition is skewed to basic and acidic residues. Basic residues predominate over residues 218–227 (PGRHRLGRKR). Helical transmembrane passes span 250 to 270 (AGFWWLIELLVLVGEYVETCG), 300 to 320 (GWAQVMFQFLSQGFYCGVGLF), and 326 to 346 (LLGALLLLALALFLGFLQLGW). The region spanning 443–507 (NPFHVLGVEA…EKRKEYEMKR (65 aa)) is the J domain. Positions 658-702 (MPNGNFFAAPQPAPGAAAASKPNSTVPKGEAKPKRRKKVRRPFQR) are disordered. The span at 659-676 (PNGNFFAAPQPAPGAAAA) shows a compositional bias: low complexity. Residues 690–702 (PKRRKKVRRPFQR) are compositionally biased toward basic residues.

Interacts with the FxxxFxxxF motif of DRD1 via its C-terminal domain. Highly expressed in pancreas and selectively expressed in brain, lung, liver, skeletal muscle and kidney.

It localises to the endoplasmic reticulum membrane. Functionally, regulates the export of target proteins, such as DRD1, from the endoplasmic reticulum to the cell surface. The protein is DnaJ homolog subfamily C member 14 (DNAJC14) of Homo sapiens (Human).